Consider the following 450-residue polypeptide: UDP-N-acetylmuramoylalanine--D-glutamate ligase (450 aa).

119-125 (GSNGKTT) lines the ATP pocket.

It belongs to the MurCDEF family.

It is found in the cytoplasm. The catalysed reaction is UDP-N-acetyl-alpha-D-muramoyl-L-alanine + D-glutamate + ATP = UDP-N-acetyl-alpha-D-muramoyl-L-alanyl-D-glutamate + ADP + phosphate + H(+). It functions in the pathway cell wall biogenesis; peptidoglycan biosynthesis. In terms of biological role, cell wall formation. Catalyzes the addition of glutamate to the nucleotide precursor UDP-N-acetylmuramoyl-L-alanine (UMA). In Streptococcus pneumoniae serotype 4 (strain ATCC BAA-334 / TIGR4), this protein is UDP-N-acetylmuramoylalanine--D-glutamate ligase.